The primary structure comprises 320 residues: Uridine phosphorylase 2 (320 aa).

Residues glycine 66, arginine 100, and 144–147 (RIGT) each bind phosphate. Residues cysteine 95 and cysteine 102 are joined by a disulfide bond. Uridine-binding positions include 148 to 149 (SG) and 223 to 225 (QGR).

The protein belongs to the PNP/UDP phosphorylase family. As to quaternary structure, homodimer. In terms of tissue distribution, liver specific.

The enzyme catalyses uridine + phosphate = alpha-D-ribose 1-phosphate + uracil. The catalysed reaction is 2'-deoxyuridine + phosphate = 2-deoxy-alpha-D-ribose 1-phosphate + uracil. It functions in the pathway pyrimidine metabolism; UMP biosynthesis via salvage pathway; uracil from uridine (phosphorylase route): step 1/1. Its activity is regulated as follows. A conditional disulfide bridge can form within the protein that dislocates a critical phosphate-coordinating arginine Arg-100 away from the active site, disabling the enzyme. Catalyzes the reversible phosphorylytic cleavage of uridine to uracil and ribose-1-phosphate which can then be utilized as carbon and energy sources or in the rescue of pyrimidine bases for nucleotide synthesis. Shows broad substrate specificity and can also accept deoxyuridine and other analogous compounds. The sequence is that of Uridine phosphorylase 2 from Mus musculus (Mouse).